Reading from the N-terminus, the 500-residue chain is Lysine--tRNA ligase (500 aa).

Residues E410 and E417 each coordinate Mg(2+).

This sequence belongs to the class-II aminoacyl-tRNA synthetase family. Homodimer. Mg(2+) serves as cofactor.

It localises to the cytoplasm. It carries out the reaction tRNA(Lys) + L-lysine + ATP = L-lysyl-tRNA(Lys) + AMP + diphosphate. The sequence is that of Lysine--tRNA ligase from Pseudomonas savastanoi pv. phaseolicola (strain 1448A / Race 6) (Pseudomonas syringae pv. phaseolicola (strain 1448A / Race 6)).